The following is a 119-amino-acid chain: MTSRILQRFFTVSTSLRSLTRAEVPGEKIDAKRARLLYQSKKRGILENDILLGDFAEQNLKKMSEPELKAYDKLINGEHMEWDLFYYLSNKKSPPEDVESCQVYQKVKKFVDDKRVPKS.

It belongs to the SDHAF2 family. As to quaternary structure, interacts with the flavoprotein subunit within the SDH catalytic dimer.

The protein resides in the mitochondrion matrix. Functionally, plays an essential role in the assembly of succinate dehydrogenase (SDH), an enzyme complex (also referred to as respiratory complex II) that is a component of both the tricarboxylic acid (TCA) cycle and the mitochondrial electron transport chain, and which couples the oxidation of succinate to fumarate with the reduction of ubiquinone (coenzyme Q) to ubiquinol. Required for flavinylation (covalent attachment of FAD) of the flavoprotein subunit of the SDH catalytic dimer. The chain is Succinate dehydrogenase assembly factor 2, mitochondrial from Caenorhabditis elegans.